We begin with the raw amino-acid sequence, 142 residues long: HTH-type transcriptional regulator MntR (142 aa).

Positions 1 to 63 constitute an HTH dtxR-type domain; sequence MTTPSMEDYI…YEKYRGLVLT (63 aa). Cd(2+) is bound by residues Asp-8, Glu-11, His-77, Glu-99, Glu-102, and His-103. 6 residues coordinate Mn(2+): Asp-8, Glu-11, His-77, Glu-99, Glu-102, and His-103.

It belongs to the DtxR/MntR family. Homodimer.

Its subcellular location is the cytoplasm. DNA binding is strongly activated by Mn(2+) and Cd(2+), but it is poorly activated by non-cognate metal cations, including Co(2+), Fe(2+), Ni(2+), Ca(2+) and Zn(2+). In the strict absence of divalent transition metal ions, MntR has a low affinity for DNA. Functionally, central regulator of manganese homeostasis that regulates the expression of both manganese uptake and efflux systems. In the presence of high levels of manganese, it mediates repression of the manganese uptake systems MntH and MntABCD and activation of the efflux systems MneP and MneS. Binds with high affinity to the regulatory regions of its target genes. The manganese concentration required for activation of efflux is higher than that for repression of uptake. This is HTH-type transcriptional regulator MntR from Bacillus subtilis (strain 168).